The primary structure comprises 214 residues: Insulin-like growth factor 2 (214 aa).

The segment at 48–79 is b; the sequence is EVASAETLCGGELVDALQFVCEDRGFYFSRPT. 3 disulfides stabilise this stretch: cysteine 56/cysteine 97, cysteine 68/cysteine 110, and cysteine 96/cysteine 101. The interval 80–90 is c; that stretch reads SRSNSRRSQNR. Residues 91 to 111 form an a region; sequence GIVEECCFRSCDLNLLEQYCA. The interval 112 to 117 is d; sequence KPAKSE. Residues 118–214 constitute a propeptide, e peptide; the sequence is RDVSATSLQI…PPTDNYVSHN (97 aa).

It belongs to the insulin family.

The protein localises to the secreted. Its function is as follows. The insulin-like growth factors, isolated from plasma, are structurally and functionally related to insulin but have a much higher growth-promoting activity. Acts as a ligand for integrin which is required for IGF2 signaling. The protein is Insulin-like growth factor 2 of Oncorhynchus mykiss (Rainbow trout).